The primary structure comprises 384 residues: Putative spore germination protein YfkR (384 aa).

The signal sequence occupies residues 1 to 20; sequence MKKTIYKCVLPLLICILLTG. The N-palmitoyl cysteine moiety is linked to residue Cys-21. Cys-21 is lipidated: S-diacylglycerol cysteine.

The protein belongs to the GerABKC lipoprotein family.

It is found in the cell membrane. In terms of biological role, may be involved in spore germination. The protein is Putative spore germination protein YfkR (yfkR) of Bacillus subtilis (strain 168).